The primary structure comprises 114 residues: Nucleoid-associated protein PCC8801_2554 (114 aa).

It belongs to the YbaB/EbfC family. As to quaternary structure, homodimer.

It is found in the cytoplasm. It localises to the nucleoid. Its function is as follows. Binds to DNA and alters its conformation. May be involved in regulation of gene expression, nucleoid organization and DNA protection. The sequence is that of Nucleoid-associated protein PCC8801_2554 from Rippkaea orientalis (strain PCC 8801 / RF-1) (Cyanothece sp. (strain PCC 8801)).